A 142-amino-acid polypeptide reads, in one-letter code: Large ribosomal subunit protein bL17 (142 aa).

The protein belongs to the bacterial ribosomal protein bL17 family. In terms of assembly, part of the 50S ribosomal subunit. Contacts protein L32.

The protein is Large ribosomal subunit protein bL17 of Brucella canis (strain ATCC 23365 / NCTC 10854 / RM-666).